The primary structure comprises 207 residues: Holliday junction branch migration complex subunit RuvA (207 aa).

The domain I stretch occupies residues 1 to 65; sequence MYDYIRGVLT…ETEHVLYGFH (65 aa). The segment at 66–144 is domain II; the sequence is TRGERECFRM…DLLPLDAQIL (79 aa). The interval 145–155 is flexible linker; that stretch reads ASWEPAKPSCM. A domain III region spans residues 155 to 207; sequence MEEGIQALAALGYPKSSAERMIAEAMSELPDHASVAEILPIALKKNLQGLNKI.

It belongs to the RuvA family. As to quaternary structure, homotetramer. Forms an RuvA(8)-RuvB(12)-Holliday junction (HJ) complex. HJ DNA is sandwiched between 2 RuvA tetramers; dsDNA enters through RuvA and exits via RuvB. An RuvB hexamer assembles on each DNA strand where it exits the tetramer. Each RuvB hexamer is contacted by two RuvA subunits (via domain III) on 2 adjacent RuvB subunits; this complex drives branch migration. In the full resolvosome a probable DNA-RuvA(4)-RuvB(12)-RuvC(2) complex forms which resolves the HJ.

The protein resides in the cytoplasm. In terms of biological role, the RuvA-RuvB-RuvC complex processes Holliday junction (HJ) DNA during genetic recombination and DNA repair, while the RuvA-RuvB complex plays an important role in the rescue of blocked DNA replication forks via replication fork reversal (RFR). RuvA specifically binds to HJ cruciform DNA, conferring on it an open structure. The RuvB hexamer acts as an ATP-dependent pump, pulling dsDNA into and through the RuvAB complex. HJ branch migration allows RuvC to scan DNA until it finds its consensus sequence, where it cleaves and resolves the cruciform DNA. The polypeptide is Holliday junction branch migration complex subunit RuvA (Chlamydia abortus (strain DSM 27085 / S26/3) (Chlamydophila abortus)).